The sequence spans 623 residues: Frizzled and smoothened-like protein M (623 aa).

An N-terminal signal peptide occupies residues 1–18 (MKSIFIIIFILYVFQVNS). At 19 to 243 (QTIYPIDPSG…WDQLYNLSNT (225 aa)) the chain is on the extracellular side. The 139-residue stretch at 25–163 (DPSGKCEQYI…NYSEFNLTNY (139 aa)) folds into the FZ domain. Disulfide bonds link Cys-30–Cys-100 and Cys-42–Cys-93. 8 N-linked (GlcNAc...) asparagine glycosylation sites follow: Asn-57, Asn-106, Asn-109, Asn-154, Asn-159, Asn-169, Asn-199, and Asn-239. Residues 244–264 (LAVLSTFGSLYLLVTFIILNP) form a helical membrane-spanning segment. Residues 265–273 (KVTSFDRMY) lie on the Cytoplasmic side of the membrane. A helical membrane pass occupies residues 274 to 294 (GFFNGSVFMMSLSGVILFIAG). Residues 295 to 317 (GPRALIKDGGARISVFEDPLCSS) lie on the Extracellular side of the membrane. Residues 318–338 (TGFIFQLFAINAILFWAYMGF) form a helical membrane-spanning segment. The Cytoplasmic portion of the chain corresponds to 339–354 (DLWWRVKYITKPLNIQ). A helical transmembrane segment spans residues 355–375 (KYYVPIAFTISFIFSVIPLAT). The Extracellular portion of the chain corresponds to 376–397 (KNYRMVRGNIHCWVHKAVLQNT). Residues 398-418 (LFFGPLGLTLTISTGFIGLVI) form a helical membrane-spanning segment. The Cytoplasmic segment spans residues 419 to 439 (YEIYKIVKATGRGGIMKLEIK). Residues 440-460 (PILNIVLIYFSFVYIFAFNFH) traverse the membrane as a helical segment. The Extracellular segment spans residues 461–494 (NDNNSKNTYGSIDEFFQCTLESDDPSKCTVGGPS). Residue Asn-463 is glycosylated (N-linked (GlcNAc...) asparagine). A helical membrane pass occupies residues 495 to 515 (IGSLGYFIYCIRIYGIYCFFL). Over 516–623 (QGLNERAFKI…DIEIGSVNIK (108 aa)) the chain is Cytoplasmic. The disordered stretch occupies residues 552–590 (PSESGNSSTTAGTSTTINNSNINKKNNNSKPTLSTMDSN). Low complexity predominate over residues 555–580 (SGNSSTTAGTSTTINNSNINKKNNNS).

This sequence belongs to the G-protein coupled receptor Fz/Smo family.

Its subcellular location is the membrane. The protein is Frizzled and smoothened-like protein M (fslM-1) of Dictyostelium discoideum (Social amoeba).